The primary structure comprises 324 residues: MSRDSPPAFDPYKHLNITINPNGSCTRHFVWPRVEPDPDPCPGKLAASKDVTINHETGVSVRIFRPTNLPSNDNAVARLPIIIHLHGSGWILYPANSAANDRCCSQMASELTVIVVSVHYRLPPEHRLPAQYDDALDALLWVKQQVVDSTNGEPWLKDYADFSRCYICGSSNGANIAFQLALRSLDHDLTPLQIDGCVFYQPLFGGKTRTKSELKNFADPVMPVPAVDAMWELSLPVGVDRDHRYCNPLGYLPQKEKVGRLGRCLVIGYGGDTSLDRQQDFVNLLVAAGVRVEARFDDAGFHSIELVDPRRAVALLNMIRDFIS.

An Involved in the stabilization of the negatively charged intermediate by the formation of the oxyanion hole motif is present at residues 86 to 88; the sequence is HGS. Active-site residues include Ser-171, Asp-272, and His-302.

This sequence belongs to the 'GDXG' lipolytic enzyme family. Expressed in flowers.

It carries out the reaction a carboxylic ester + H2O = an alcohol + a carboxylate + H(+). Functionally, carboxylesterase acting on esters with varying acyl chain length. This chain is Probable carboxylesterase 9 (CXE9), found in Arabidopsis thaliana (Mouse-ear cress).